We begin with the raw amino-acid sequence, 346 residues long: Histone PARylation factor 1 (346 aa).

At M1 the chain carries N-acetylmethionine. N6-acetyllysine is present on residues K19, K186, and K233. D235 is modified (polyADP-ribosyl aspartic acid). Y238 carries the post-translational modification ADP-ribosyltyrosine. Residue E240 is modified to PolyADP-ribosyl glutamic acid. Residues 242-346 (PETDADLKRI…SEENIDQLAG (105 aa)) form an interaction with PARP1 region. The active-site Proton donor is E284.

It belongs to the HPF1 family. Interacts with PARP1 (via the PARP catalytic domain). Interacts with PARP2 (via the PARP catalytic domain). Interacts with core nucleosomes in a PARP1- and PARP2-dependent manner.

The protein localises to the chromosome. Its subcellular location is the nucleus. In terms of biological role, cofactor for serine ADP-ribosylation that confers serine specificity on PARP1 and PARP2 and plays a key role in DNA damage response. Initiates the repair of double-strand DNA breaks: recruited to DNA damage sites by PARP1 and PARP2 and switches the amino acid specificity of PARP1 and PARP2 from aspartate or glutamate to serine residues, licensing serine ADP-ribosylation of target proteins. Serine ADP-ribosylation of target proteins, such as histones, promotes decompaction of chromatin and the recruitment of repair factors leading to the reparation of DNA strand breaks. Serine ADP-ribosylation of proteins constitutes the primary form of ADP-ribosylation of proteins in response to DNA damage. HPF1 acts by completing the active site of PARP1 and PARP2: forms a composite active site composed of residues from HPF1 and PARP1 or PARP2. While HPF1 promotes the initiation of serine ADP-ribosylation, it restricts the polymerase activity of PARP1 and PARP2 in order to limit the length of poly-ADP-ribose chains. HPF1 also promotes tyrosine ADP-ribosylation, probably by conferring tyrosine specificity on PARP1. This is Histone PARylation factor 1 from Mus musculus (Mouse).